We begin with the raw amino-acid sequence, 271 residues long: Expansin-B1 (271 aa).

The signal sequence occupies residues 1-24 (MQLFPVILPTLCVFLHLLISGSGS). Residues 58–169 (GGACGYGSLV…RRTACKYRGK (112 aa)) enclose the Expansin-like EG45 domain. 3 disulfide bridges follow: cysteine 61-cysteine 90, cysteine 93-cysteine 164, and cysteine 98-cysteine 104. Residues 182 to 263 (YWLSLLIEYE…NWVPKATYTS (82 aa)) form the Expansin-like CBD domain. An N-linked (GlcNAc...) asparagine glycan is attached at asparagine 242.

This sequence belongs to the expansin family. Expansin B subfamily.

The protein localises to the secreted. The protein resides in the cell wall. It localises to the membrane. Functionally, may cause loosening and extension of plant cell walls by disrupting non-covalent bonding between cellulose microfibrils and matrix glucans. No enzymatic activity has been found. In Arabidopsis thaliana (Mouse-ear cress), this protein is Expansin-B1 (EXPB1).